The chain runs to 269 residues: MSQKIYFKITNDKECHNGFQYKDGLNILQEKFNDNLEDSCVPGRLYFTKPKHILKYLDYGIYLREIYLPTDNPDFKMIRDPTGDKYGANMIILGERRDLRNPDTWKYMVSKGVDIRAEDDYAVKWASKNGHLKVVEYLVSLGADIKSDGDYAVRWASENGHIDVVKYLVSQNADIRADNDYAVKWASSNGHLEVVKYLVSQGANIREQNDYAIRLASQYGHLEVVKYLISLGADIRADNDCAVRLASENGHIEIVNYLISQGADIRAKK.

ANK repeat units follow at residues 118–147, 148–177, 179–207, 208–237, and 238–267; these read EDDY…DIKS, DGDY…DIRA, NDYA…NIRE, QNDY…DIRA, and DNDC…DIRA.

The protein is Putative ankyrin repeat protein L23 of Acanthamoeba polyphaga (Amoeba).